Here is an 834-residue protein sequence, read N- to C-terminus: Enhancer of filamentation 1 (834 aa).

The 63-residue stretch at 3–65 folds into the SH3 domain; that stretch reads ARNLMARALY…PGNRVKLLIG (63 aa). A phosphotyrosine mark is found at Y92, Y164, Y166, Y177, Y189, Y214, and Y223. S296 bears the Phosphoserine mark. Y317 bears the Phosphotyrosine mark. Disordered regions lie at residues 328–402 and 584–624; these read PPAE…DKRL and SQMP…SERS. Basic and acidic residues predominate over residues 332-344; sequence TSEKANPEERDGV. A Caspase cleavage related site motif is present at residues 360-363; the sequence is DVVD. Residues 368-397 are compositionally biased toward low complexity; it reads LSFSSTGSTRSNMSTSSTTSKESSVSASPS. Residue S369 is modified to Phosphoserine. Residues 710 to 760 form a divergent helix-loop-helix motif region; that stretch reads FYYDQCETHYISLLNAIDALFSCVSSAQPPRIFVAHSKFVILSAHKLVFIG. The tract at residues 710–834 is required for interaction with PLK1; it reads FYYDQCETHY…KRSLLEMATF (125 aa). Residue S780 is modified to Phosphoserine. At T804 the chain carries Phosphothreonine.

It belongs to the CAS family. As to quaternary structure, homodimer. Forms heterodimers with BCAR1/p130cas. Forms complexes with PTK2B/RAFTK, adapter protein CRKL and LYN kinase. Part of a complex composed of NEDD9, AURKA and CTTN; within the complex NEDD9 acts as a scaffold protein and is required for complex formation. Part of a ternary complex composed of SMAD3, ITCH/AIP4 and NEDD9/HEF1; within the complex NEDD9/HEF1 interacts (via N-terminus) with ITCH/AIP4; the complex mediates ubiquitination and proteasomal degradation of NEDD9/HEF1. Interacts with ID2. Interacts with CTTN (via N-terminus). Interacts with MICAL. Interacts with TXNL4/DIM1. Interacts with BCAR3 (via Ras-GEF domain). Interacts with SH2D3C isoform 1 and isoform 2. Interacts with BCAR3. Interacts with ECT2. Interacts with PTPN11/SHP-2 (via SH2 domains); the interaction is enhanced when NEDD9/CAS-L is tyrosine phosphorylated. Interacts (via C-terminus) with PLK1 (via polo box domain). Interacts with NKX2-5. Interacts with SMAD3; the interaction is inhibited by oxidation of NEDD9. Interacts with ABL1; interaction is induced by CXCL12-mediated phosphorylation of NEDD/HEF1. Interacts (via SH3 domain) with PTK2/FAK. Interacts with FYN; in the presence of PTK2. Interacts with INPPL1/SHIP2. Polyubiquitinated by ITCH/AIP4, leading to proteasomal degradation. In terms of processing, PTK2/FAK1 phosphorylates the protein at the YDYVHL motif (conserved among all cas proteins) following integrin stimulation. The SRC family kinases (FYN, SRC, LCK and CRK) are recruited to the phosphorylated sites and can phosphorylate other tyrosine residues. Ligation of either integrin beta-1 or B-cell antigen receptor on tonsillar B-cells and B-cell lines promotes tyrosine phosphorylation and both integrin and BCR-mediated tyrosine phosphorylation requires an intact actin network. Phosphorylation is required to recruit NEDD9 to T-cell receptor microclusters at the periphery of newly formed immunological synapses. In fibroblasts transformation with oncogene v-ABL results in an increase in tyrosine phosphorylation. Transiently phosphorylated following CD3 cross-linking and this phosphorylated form binds to CRKL and C3G. A mutant lacking the SH3 domain is phosphorylated upon CD3 cross-linking but not upon integrin beta-1 cross-linking. Tyrosine phosphorylation occurs upon stimulation of the G-protein coupled C1a calcitonin receptor. Calcitonin-stimulated tyrosine phosphorylation is mediated by calcium- and protein kinase C-dependent mechanisms and requires the integrity of the actin cytoskeleton. Phosphorylation at Ser-369 induces proteasomal degradation. Phosphorylated by LYN. Phosphorylation at Ser-780 by CSNK1D or CSNK1E, or phosphorylation of Thr-804 by CSNK1E enhances the interaction of NEDD9 with PLK1.

Its subcellular location is the cytoplasm. The protein resides in the cell cortex. The protein localises to the nucleus. It localises to the golgi apparatus. It is found in the cell projection. Its subcellular location is the lamellipodium. The protein resides in the cell junction. The protein localises to the focal adhesion. It localises to the cytoskeleton. It is found in the spindle pole. Its subcellular location is the cilium. The protein resides in the cilium basal body. The protein localises to the basolateral cell membrane. In terms of biological role, negatively regulates embryonic fibroblast migration. May play an important role in integrin beta-1 or B cell antigen receptor (BCR) mediated signaling in B- and T-cells. Integrin beta-1 stimulation leads to recruitment of various proteins including CRKl and SHPTP2 to the tyrosine phosphorylated form. Promotes adhesion and migration of lymphocytes; as a result required for the correct migration of lymphocytes to the spleen and other secondary lymphoid organs. Plays a role in the organization of T-cell F-actin cortical cytoskeleton and the centralization of T-cell receptor microclusters at the immunological synapse. Negatively regulates cilia outgrowth in polarized cysts. Modulates cilia disassembly via activation of AURKA-mediated phosphorylation of HDAC6 and subsequent deacetylation of alpha-tubulin. In conjunction with NKX2-5, positively regulates transcription of genes such as COL3A1 and MMP2, resulting in increased pulmonary endothelial fibrosis in response to hypoxia. Positively regulates RANKL-induced osteoclastogenesis. Required for the maintenance of hippocampal dendritic spines in the dentate gyrus and CA1 regions, thereby involved in spatial learning and memory. In Canis lupus familiaris (Dog), this protein is Enhancer of filamentation 1.